Consider the following 550-residue polypeptide: Arginine--tRNA ligase (550 aa).

The 'HIGH' region signature appears at 130–140 (ANPTGPIHLGG).

It belongs to the class-I aminoacyl-tRNA synthetase family. As to quaternary structure, monomer.

It is found in the cytoplasm. It catalyses the reaction tRNA(Arg) + L-arginine + ATP = L-arginyl-tRNA(Arg) + AMP + diphosphate. The chain is Arginine--tRNA ligase from Rhodococcus erythropolis (strain PR4 / NBRC 100887).